The following is a 228-amino-acid chain: Putative adhesin A1I_01215 (228 aa).

The N-terminal stretch at 1–22 (MKKLLLIAATSATVLSSALSFA) is a signal peptide.

This chain is Putative adhesin A1I_01215, found in Rickettsia bellii (strain OSU 85-389).